The sequence spans 846 residues: Translation initiation factor IF-2 (846 aa).

The 168-residue stretch at 345–512 folds into the tr-type G domain; sequence SRAPVVTIMG…AVLLQSEVLE (168 aa). A G1 region spans residues 354–361; that stretch reads GHVDHGKT. 354-361 is a binding site for GTP; that stretch reads GHVDHGKT. The tract at residues 379–383 is G2; sequence GITQH. A G3 region spans residues 400-403; the sequence is DTPG. GTP is bound by residues 400 to 404 and 454 to 457; these read DTPGH and NKID. The tract at residues 454 to 457 is G4; sequence NKID. The segment at 490 to 492 is G5; the sequence is SAK.

The protein belongs to the TRAFAC class translation factor GTPase superfamily. Classic translation factor GTPase family. IF-2 subfamily.

It is found in the cytoplasm. Functionally, one of the essential components for the initiation of protein synthesis. Protects formylmethionyl-tRNA from spontaneous hydrolysis and promotes its binding to the 30S ribosomal subunits. Also involved in the hydrolysis of GTP during the formation of the 70S ribosomal complex. The protein is Translation initiation factor IF-2 of Francisella tularensis subsp. holarctica (strain FTNF002-00 / FTA).